Reading from the N-terminus, the 451-residue chain is Photosystem II CP43 reaction center protein (451 aa).

At 1 to 46 (ATNRDQESSGFAWWAGNARLINLSGKLLGAHVAHAGLIVFWAGAMT) the chain is on the cytoplasmic side. Trp13, Leu27, and Ala30 together coordinate chlorophyll a. A helical membrane pass occupies residues 47–71 (LFELAHFIPEKPMYEQGLILIPHIA). Residues 72–111 (TLGWGVGPGGEVVDTFPFFVVGVVHLISSAVLGFGGVYHA) are Lumenal-facing. Chlorophyll a contacts are provided by Val92 and Gly106. Residues 112 to 133 (IRGPETLEEYSSFFGYDWKDKN) traverse the membrane as a helical segment. Residues 134–155 (KMTTILGFHLIVLGIGALLLVA) lie on the Cytoplasmic side of the membrane. Ile138 is a chlorophyll a binding site. A helical membrane pass occupies residues 156–178 (KAMFFGGLYDTWAPGGGDVRVIT). Over 179–232 (NPTLDPRVIFGYLLKSPFGGEGWIVSVNNLEDVVGGHIWIGLICIAGGIWHILT) the chain is Lumenal. The chlorophyll a site is built by Val211 and Gly225. Residues 233–253 (TPFGWARRAFIWSGEAYLSYS) form a helical membrane-spanning segment. The Cytoplasmic segment spans residues 254 to 268 (LGALSMMGFIATCFV). A helical transmembrane segment spans residues 269 to 290 (WFNNTVYPSEFYGPTGPEASQA). At 291-424 (QAMTFLIRDQ…FLVGHLWHAG (134 aa)) the chain is on the lumenal side. A [CaMn4O5] cluster-binding site is contributed by Glu345. Chlorophyll a is bound by residues Leu404, Phe415, and Gly418. A helical membrane pass occupies residues 425–449 (RARAAAAGFEKGIDRESEPVLSMPS). Over 450-451 (LD) the chain is Cytoplasmic.

The protein belongs to the PsbB/PsbC family. PsbC subfamily. PSII is composed of 1 copy each of membrane proteins PsbA, PsbB, PsbC, PsbD, PsbE, PsbF, PsbH, PsbI, PsbJ, PsbK, PsbL, PsbM, PsbT, PsbX, PsbY, PsbZ, Psb30/Ycf12, peripheral proteins PsbO, CyanoQ (PsbQ), PsbU, PsbV and a large number of cofactors. It forms dimeric complexes. Binds multiple chlorophylls and provides some of the ligands for the Ca-4Mn-5O cluster of the oxygen-evolving complex. It may also provide a ligand for a Cl- that is required for oxygen evolution. PSII binds additional chlorophylls, carotenoids and specific lipids. serves as cofactor.

It localises to the cellular thylakoid membrane. Its function is as follows. One of the components of the core complex of photosystem II (PSII). It binds chlorophyll and helps catalyze the primary light-induced photochemical processes of PSII. PSII is a light-driven water:plastoquinone oxidoreductase, using light energy to abstract electrons from H(2)O, generating O(2) and a proton gradient subsequently used for ATP formation. This chain is Photosystem II CP43 reaction center protein, found in Thermostichus vulcanus (Synechococcus vulcanus).